A 519-amino-acid polypeptide reads, in one-letter code: Flavin-dependent halogenase rdc2 (519 aa).

The signal sequence occupies residues 1–21; that stretch reads MSVPKSCTILVAGGGPAGSYA. Gly14, Ala17, and Glu47 together coordinate FAD. 2 residues coordinate chloride: Ser324 and Gly325.

This sequence belongs to the flavin-dependent halogenase family.

Its pathway is secondary metabolite biosynthesis. In terms of biological role, flavin-dependent halogenase; part of the gene cluster that mediates the biosynthesis of radicicol, a resorcylic acid lactone (RAL) that irreversibly inhibits the HSP90 molecular chaperone, an important target for cancer chemotherapy. Within the cluster, rdc2 is involved in the chlorination of the resorcylic acid lactone (RAL) structure to convert monocillin I into radicicol. Also chlorinates monocillin II to produce 6-cholomonocillin II and monocilllin IV to produce 13-chloromonocillin IV. In contrast to most fungal halogenases, rdc2 has a broad substrate specificity and can accept a variety of macrolactones as the substrates to generate chlorinated derivatives, including dihydroresorcylide, zearalenone, curvularin, or even curcumin. Rdc2 is able to dichlorinate dihydroresorcylide and monocillin IV. Dihydroresorcylide is first chlorinated at position 11 to produce 11-chlorodihydroresorcylide which can be further chlorinated by rdc2 at possition 13. Mororeover, rdc2 can incorporate bromine into dihydroresorcylide to yield the corresponding mono- and di-brominated derivatives. Finally, rdc2 is also able to halogenate the isoquinolines 4-hydroxyisoquinoline and 6-hydroxyisoquinoline into 3-chloro-4-hydroxyisoquinoline and 5-chloro-6-hydroxyisoquinoline, respectively. The radicicol cluster encodes only two apparent post-PKS enzymes, a cytochrome P450 monooxygenase (rdc4) and a non-heme halogenase (rdc2) that could introduce the epoxide and the chlorine, respectively. If this cluster includes all the genes required for radicicol biosynthesis, the remaining structural features of radicicol are presumably generated by the PKSs rdc1 and rdc5. The C-2' ketone could arise if the R-PKS rdc5 and NR-PKS rdc1 each carry out four iterations, in contrast to the five iteration-three iteration split for the hypothemycin PKSs. The origin of the cis 5',6' double bond is not known. The radicicol R-PKS rdc5 ER domain may catalyze either double bond isomerization or reduction in the third iteration. The protein is Flavin-dependent halogenase rdc2 of Metacordyceps chlamydosporia (Nematophagous fungus).